A 402-amino-acid polypeptide reads, in one-letter code: DNA replication and repair protein RecF (402 aa).

30 to 37 (GYNGIGKT) lines the ATP pocket.

Belongs to the RecF family.

Its subcellular location is the cytoplasm. In terms of biological role, the RecF protein is involved in DNA metabolism; it is required for DNA replication and normal SOS inducibility. RecF binds preferentially to single-stranded, linear DNA. It also seems to bind ATP. This is DNA replication and repair protein RecF from Pseudarthrobacter chlorophenolicus (strain ATCC 700700 / DSM 12829 / CIP 107037 / JCM 12360 / KCTC 9906 / NCIMB 13794 / A6) (Arthrobacter chlorophenolicus).